Here is a 20-residue protein sequence, read N- to C-terminus: Short cationic peptide-3a (20 aa).

Glu20 is modified (glutamic acid 1-amide).

In terms of tissue distribution, expressed by the venom gland.

Its subcellular location is the secreted. This is Short cationic peptide-3a from Cupiennius salei (American wandering spider).